Consider the following 308-residue polypeptide: MDEEGSATARAKMMPQTLVLDHVSPATRLLEKRRQMFEVQEALEAQKQDFNRKEEVFKRREEALKLKDLELQESLIRFSKFLQENDSKRARAEKKANDEIKARIQKEKEIEQLTEVLEELKSEKERILEVLEKNMRYQHYLESVLEVADEYQEVADLLLRHATLSATNADLKDHQRKCSELAEKVRTELQIYVKQKTDEILNLNNQVAKLKTELEGYEAEAMVQEAKKDSSLQIASQRTLEYGQVVLSADNIFNRCRSKSSIGHPAESNPLHQLDVIGNFVSDLGSIIKQFKQEQAKRASLASRAEIE.

Coiled coils occupy residues arginine 103–asparagine 134 and leucine 164–lysine 227.

It belongs to the CFAP73 family. Interacts with FAP100; form the modifier of inner arm (MIA) complex.

The protein localises to the cytoplasm. It is found in the cytoskeleton. It localises to the flagellum axoneme. Functionally, as part of MIA, a complex associated with the outer doublet microtubules of the axoneme, may play a role in ciliary/flagellar motility by regulating the assembly and the activity of inner dynein arm. The polypeptide is Cilia- and flagella-associated protein 73 (Chlamydomonas reinhardtii (Chlamydomonas smithii)).